The following is a 248-amino-acid chain: tRNA (guanine-N(1)-)-methyltransferase (248 aa).

Residues G117 and 137–142 contribute to the S-adenosyl-L-methionine site; that span reads LGDFVL.

Belongs to the RNA methyltransferase TrmD family. In terms of assembly, homodimer.

It is found in the cytoplasm. It carries out the reaction guanosine(37) in tRNA + S-adenosyl-L-methionine = N(1)-methylguanosine(37) in tRNA + S-adenosyl-L-homocysteine + H(+). Specifically methylates guanosine-37 in various tRNAs. The chain is tRNA (guanine-N(1)-)-methyltransferase from Herminiimonas arsenicoxydans.